The chain runs to 271 residues: Sorting nexin-11 (271 aa).

The region spanning 16-132 (VITVRVQDPR…HLFLQSQLSV (117 aa)) is the PX domain. Residues Arg-59, Lys-85, and Arg-99 each contribute to the a 1,2-diacyl-sn-glycero-3-phospho-(1D-myo-inositol-3-phosphate) site. Residues 135–139 (IEACV) form an important for membrane trafficking region. The disordered stretch occupies residues 185–271 (PRSGRRSSPS…PTQLDTAWDK (87 aa)). Residues 213–230 (SEGPSSESPTLLPSSSLP) show a composition bias toward low complexity.

It belongs to the sorting nexin family. In terms of assembly, monomer. Interacts with TRPV3; this interaction promotes TRPV3 trafficking from the cell membrane to lysosome for degradation.

It localises to the cell membrane. Its subcellular location is the endosome. It is found in the cytoplasm. Functionally, phosphoinositide-binding protein involved in protein sorting and membrane trafficking in endosomes. Regulates the levels of TRPV3 by promoting its trafficking from the cell membrane to lysosome for degradation. The chain is Sorting nexin-11 (Snx11) from Mus musculus (Mouse).